The chain runs to 340 residues: Terpene synthase 29 (340 aa).

Positions 132, 197, 257, 261, and 265 each coordinate Mg(2+). Positions 132 to 138 match the DDXXXXD motif motif; it reads DEPDILE. The short motif at 257–265 is the NSE/DTE motif element; the sequence is NDILSFYKE.

The protein belongs to the trichodiene synthase family. Requires Mg(2+) as cofactor.

Functionally, terpene cyclase that catalyzes the cyclization of farnesyl diphosphate (FPP) to a single major terpene scaffold whose chemical structure is still unknown. In Postia placenta (strain ATCC 44394 / Madison 698-R) (Brown rot fungus), this protein is Terpene synthase 29.